We begin with the raw amino-acid sequence, 128 residues long: MAYRKLGRTSSQRKAMLRDLTTDLLINESIVTTEARAKEIRKTVEKMITLGKRGDLHARRQAAAFVRNEIASENYDEATDKYTSTTALQKLFSEIAPRYAERNGGYTRILKTESRRGDAAPMAIIELV.

It belongs to the bacterial ribosomal protein bL17 family. As to quaternary structure, part of the 50S ribosomal subunit. Contacts protein L32.

The sequence is that of Large ribosomal subunit protein bL17 from Streptococcus pneumoniae serotype 4 (strain ATCC BAA-334 / TIGR4).